A 356-amino-acid chain; its full sequence is 3-isopropylmalate dehydrogenase (356 aa).

Position 73–86 (73–86 (GTQYDGLPREKRPE)) interacts with NAD(+). Substrate is bound by residues Arg-93, Arg-103, Arg-131, and Asp-220. The Mg(2+) site is built by Asp-220, Asp-244, and Asp-248. Residue 278–290 (GSAPDIAGKGIAN) coordinates NAD(+).

The protein belongs to the isocitrate and isopropylmalate dehydrogenases family. LeuB type 1 subfamily. In terms of assembly, homodimer. Requires Mg(2+) as cofactor. It depends on Mn(2+) as a cofactor.

It is found in the cytoplasm. The catalysed reaction is (2R,3S)-3-isopropylmalate + NAD(+) = 4-methyl-2-oxopentanoate + CO2 + NADH. It functions in the pathway amino-acid biosynthesis; L-leucine biosynthesis; L-leucine from 3-methyl-2-oxobutanoate: step 3/4. Catalyzes the oxidation of 3-carboxy-2-hydroxy-4-methylpentanoate (3-isopropylmalate) to 3-carboxy-4-methyl-2-oxopentanoate. The product decarboxylates to 4-methyl-2 oxopentanoate. The protein is 3-isopropylmalate dehydrogenase of Nitrosomonas europaea (strain ATCC 19718 / CIP 103999 / KCTC 2705 / NBRC 14298).